Consider the following 334-residue polypeptide: AA9 family lytic polysaccharide monooxygenase A (334 aa).

The N-terminal stretch at 1-22 is a signal peptide; that stretch reads MSPSFKSTAILGAVALAARVRA. Residues H23 and H108 each coordinate Cu(2+). 2 cysteine pairs are disulfide-bonded: C78–C200 and C119–C123. N-linked (GlcNAc...) asparagine glycosylation is present at N160. 2 residues coordinate O2: H186 and Q195. Residue Y197 coordinates Cu(2+). Residue N208 is glycosylated (N-linked (GlcNAc...) asparagine). A disordered region spans residues 244–304; that stretch reads GPALYTGGSS…PSPSLPVEIP (61 aa). Low complexity predominate over residues 249–265; sequence TGGSSPSPNPPTSTQSP.

Belongs to the polysaccharide monooxygenase AA9 family. Cu(2+) serves as cofactor.

It localises to the secreted. The enzyme catalyses [(1-&gt;4)-beta-D-glucosyl]n+m + reduced acceptor + O2 = 4-dehydro-beta-D-glucosyl-[(1-&gt;4)-beta-D-glucosyl]n-1 + [(1-&gt;4)-beta-D-glucosyl]m + acceptor + H2O.. Functionally, lytic polysaccharide monooxygenase (LPMO) that depolymerizes crystalline and amorphous polysaccharides via the oxidation of scissile alpha- or beta-(1-4)-glycosidic bonds, yielding C1 or C4 oxidation products. Catalysis by LPMOs requires the reduction of the active-site copper from Cu(II) to Cu(I) by a reducing agent and H(2)O(2) or O(2) as a cosubstrate. Active on hemicelluloses, including xylan, glucomannan, and xyloglucan. Shows clear activity on cellooligosaccharides, generating C4 oxidation products. Also displays activity on konjac glucomannan (KGM), a linear beta-1,4-linked mannan with randomly distributed glucosyl residues; as well as trace activity on lichenan, a linear beta-1,3-beta-1,4-glucan with a 1:2 ratio of beta-1,3 to beta-1,4 linkages. Has no activity on ivory nut mannan (INM), a linear beta-1,4-linked mannan without substitutions. This Malbranchea cinnamomea (Thermophilic fungus) protein is AA9 family lytic polysaccharide monooxygenase A.